The following is a 177-amino-acid chain: Large ribosomal subunit protein uL6 (177 aa).

This sequence belongs to the universal ribosomal protein uL6 family. As to quaternary structure, part of the 50S ribosomal subunit.

In terms of biological role, this protein binds to the 23S rRNA, and is important in its secondary structure. It is located near the subunit interface in the base of the L7/L12 stalk, and near the tRNA binding site of the peptidyltransferase center. The sequence is that of Large ribosomal subunit protein uL6 from Rhizobium meliloti (strain 1021) (Ensifer meliloti).